A 175-amino-acid polypeptide reads, in one-letter code: Vesicle-associated membrane protein-associated protein SCS22 (175 aa).

The region spanning 1-125 (MRIVPEKLVF…DDIVFKKIKI (125 aa)) is the MSP domain. Residues 1–154 (MRIVPEKLVF…RAPSAGNGQS (154 aa)) are Cytoplasmic-facing. The segment at 133–152 (RKPSGNHDAESARAPSAGNG) is disordered. The helical; Anchor for type IV membrane protein transmembrane segment at 155 to 175 (LSSRALLIITVIALLVGWIYY) threads the bilayer.

The protein belongs to the VAMP-associated protein (VAP) (TC 9.B.17) family.

The protein localises to the membrane. Functionally, targets proteins containing a FFAT motif to membranes. Involved in regulation of phospholipid metabolism. In Saccharomyces cerevisiae (strain ATCC 204508 / S288c) (Baker's yeast), this protein is Vesicle-associated membrane protein-associated protein SCS22 (SCS22).